Consider the following 607-residue polypeptide: Matrix metalloproteinase-16 (607 aa).

The signal sequence occupies residues 1 to 31 (MILLAFSSGRRLDFVHRSGVFFLQTLLWILC). Positions 32–119 (ATVCGTEQYF…SSKFNIRRKR (88 aa)) are excised as a propeptide. Asparagine 83 carries an N-linked (GlcNAc...) asparagine glycan. A Cysteine switch motif is present at residues 99 to 106 (PRCGVPDQ). Cysteine 101 serves as a coordination point for Zn(2+). The Extracellular portion of the chain corresponds to 120–564 (YALTGQKWQH…LDNTASTVKA (445 aa)). Aspartate 183 is a Ca(2+) binding site. Positions 193 and 195 each coordinate Zn(2+). Ca(2+)-binding residues include aspartate 200, glycine 201, glycine 203, and phenylalanine 205. Histidine 208 lines the Zn(2+) pocket. Ca(2+)-binding residues include glycine 215, glycine 217, and aspartate 219. Histidine 221 is a binding site for Zn(2+). 2 residues coordinate Ca(2+): aspartate 223 and glutamate 226. Residue histidine 246 coordinates Zn(2+). Residue glutamate 247 is part of the active site. 2 residues coordinate Zn(2+): histidine 250 and histidine 256. The interval 281–340 (DDLQGIQKIYGPPDKIPPPTRPLPTVPPHRSVPPADPRRHDRPKPPRPPTGRPSYPGAKP) is disordered. A compositionally biased stretch (pro residues) spans 294–315 (DKIPPPTRPLPTVPPHRSVPPA). 4 Hemopexin repeats span residues 340–388 (PNIC…WRGL), 389–434 (PPSI…GNGI), 436–484 (PHGI…KGIP), and 485–532 (ESPQ…FMGC). A disulfide bridge connects residues cysteine 343 and cysteine 532. A helical transmembrane segment spans residues 565 to 585 (IAIVIPCILALCLLVLVYTVF). Topologically, residues 586–607 (QFKRKGTPRHILYCKRSMQEWV) are cytoplasmic.

The protein belongs to the peptidase M10A family. Interacts with CSPG4 through CSPG4 chondroitin sulfate glycosaminoglycan. Zn(2+) is required as a cofactor. Requires Ca(2+) as cofactor. Post-translationally, the precursor is cleaved by a furin endopeptidase.

The protein resides in the cell membrane. Endopeptidase that degrades various components of the extracellular matrix, such as collagen type III and fibronectin. Activates progelatinase A. Involved in the matrix remodeling of blood vessels. It has no effect on type I, II, IV and V collagen. However, upon interaction with CSPG4, it may be involved in degradation and invasion of type I collagen by melanoma cells. In Mus musculus (Mouse), this protein is Matrix metalloproteinase-16 (Mmp16).